The sequence spans 154 residues: UPF0756 membrane protein RBAM_026200 (154 aa).

A run of 4 helical transmembrane segments spans residues 14–34, 54–74, 87–107, and 117–137; these read AIAL…LIVI, WGVT…DIGF, WIAL…LTLL, and LVIG…GPLI.

This sequence belongs to the UPF0756 family.

The protein localises to the cell membrane. The sequence is that of UPF0756 membrane protein RBAM_026200 from Bacillus velezensis (strain DSM 23117 / BGSC 10A6 / LMG 26770 / FZB42) (Bacillus amyloliquefaciens subsp. plantarum).